A 297-amino-acid polypeptide reads, in one-letter code: Light-independent protochlorophyllide reductase iron-sulfur ATP-binding protein (297 aa).

Residues 41–46 (GIGKST) and Lys-70 each bind ATP. Ser-45 is a binding site for Mg(2+). The [4Fe-4S] cluster site is built by Cys-126 and Cys-160. ATP contacts are provided by residues 211–212 (NR) and 235–237 (PDL).

Belongs to the NifH/BchL/ChlL family. Homodimer. Protochlorophyllide reductase is composed of three subunits; BchL, BchN and BchB. [4Fe-4S] cluster is required as a cofactor.

The enzyme catalyses chlorophyllide a + oxidized 2[4Fe-4S]-[ferredoxin] + 2 ADP + 2 phosphate = protochlorophyllide a + reduced 2[4Fe-4S]-[ferredoxin] + 2 ATP + 2 H2O. It participates in porphyrin-containing compound metabolism; bacteriochlorophyll biosynthesis (light-independent). Its function is as follows. Component of the dark-operative protochlorophyllide reductase (DPOR) that uses Mg-ATP and reduced ferredoxin to reduce ring D of protochlorophyllide (Pchlide) to form chlorophyllide a (Chlide). This reaction is light-independent. The L component serves as a unique electron donor to the NB-component of the complex, and binds Mg-ATP. The protein is Light-independent protochlorophyllide reductase iron-sulfur ATP-binding protein of Methylorubrum populi (strain ATCC BAA-705 / NCIMB 13946 / BJ001) (Methylobacterium populi).